The chain runs to 343 residues: Isopentenyl-diphosphate delta-isomerase (343 aa).

6-7 contributes to the substrate binding site; it reads RK. Residues Ser63, 64 to 66, Ser94, and Asn122 each bind FMN; that span reads SMT. 94–96 is a binding site for substrate; the sequence is SMR. Gln157 contributes to the substrate binding site. Glu158 contacts Mg(2+). FMN contacts are provided by residues Lys189, Thr219, 269–271, and 290–291; these read GLK and AG.

This sequence belongs to the IPP isomerase type 2 family. Homooctamer. Dimer of tetramers. The cofactor is FMN. NADPH serves as cofactor. It depends on Mg(2+) as a cofactor.

The protein localises to the cytoplasm. It catalyses the reaction isopentenyl diphosphate = dimethylallyl diphosphate. Functionally, involved in the biosynthesis of isoprenoids. Catalyzes the 1,3-allylic rearrangement of the homoallylic substrate isopentenyl (IPP) to its allylic isomer, dimethylallyl diphosphate (DMAPP). This chain is Isopentenyl-diphosphate delta-isomerase, found in Rickettsia bellii (strain OSU 85-389).